Here is a 239-residue protein sequence, read N- to C-terminus: Carboxy-S-adenosyl-L-methionine synthase (239 aa).

S-adenosyl-L-methionine is bound by residues Y36, 61–63 (GCS), 111–112 (DI), N126, and R193.

This sequence belongs to the class I-like SAM-binding methyltransferase superfamily. Cx-SAM synthase family. As to quaternary structure, homodimer.

It carries out the reaction prephenate + S-adenosyl-L-methionine = carboxy-S-adenosyl-L-methionine + 3-phenylpyruvate + H2O. In terms of biological role, catalyzes the conversion of S-adenosyl-L-methionine (SAM) to carboxy-S-adenosyl-L-methionine (Cx-SAM). This chain is Carboxy-S-adenosyl-L-methionine synthase, found in Nitratiruptor sp. (strain SB155-2).